A 154-amino-acid polypeptide reads, in one-letter code: Nuclear cap-binding protein subunit 2 (154 aa).

The tract at residues 1–23 (MTASVDLSSYRDQHFKGSRSEQE) is disordered. A compositionally biased stretch (basic and acidic residues) spans 9-23 (SYRDQHFKGSRSEQE). Residues Tyr10, Tyr33, 102 to 106 (RVDWD), 113 to 117 (RQYGR), and 123 to 124 (QV) each bind mRNA. Residues 30–108 (TTLYVGNLSF…RLIRVDWDAG (79 aa)) form the RRM domain.

The protein belongs to the RRM NCBP2 family. As to quaternary structure, component of the nuclear cap-binding complex (CBC), a heterodimer composed of Cbp80 and Cbp20 that interacts with m7GpppG-capped RNA. Interacts with Ars2.

The protein resides in the nucleus. In terms of biological role, component of the cap-binding complex (CBC), which binds co-transcriptionally to the 5' cap of pre-mRNAs and is involved in various processes such as pre-mRNA splicing and RNA-mediated gene silencing (RNAi). The CBC complex is involved in miRNA-mediated RNA interference via its interaction with Ars2 and is required for primary microRNAs (miRNAs) processing. Also involved in innate immunity via the short interfering RNAs (siRNAs) processing machinery by restricting the viral RNA production. In the CBC complex, Cbp20 recognizes and binds capped RNAs (m7GpppG-capped RNA) but requires Cbp80 to stabilize the movement of its N-terminal loop and lock the CBC into a high affinity cap-binding state with the cap structure. The protein is Nuclear cap-binding protein subunit 2 (Cbp20) of Drosophila grimshawi (Hawaiian fruit fly).